A 314-amino-acid polypeptide reads, in one-letter code: Large ribosomal subunit protein uL10 (314 aa).

Positions 281-314 are disordered; sequence GSTQETPEEKKEEAKKEEKSPDESISEGLGALFQ. Residues 287-302 are compositionally biased toward basic and acidic residues; that stretch reads PEEKKEEAKKEEKSPD.

It belongs to the universal ribosomal protein uL10 family. In terms of assembly, part of the 50S ribosomal subunit. Forms part of the ribosomal stalk which helps the ribosome interact with GTP-bound translation factors. Forms a heptameric L10(L12)2(L12)2(L12)2 complex, where L10 forms an elongated spine to which the L12 dimers bind in a sequential fashion.

Functionally, forms part of the ribosomal stalk, playing a central role in the interaction of the ribosome with GTP-bound translation factors. The polypeptide is Large ribosomal subunit protein uL10 (Thermoplasma acidophilum (strain ATCC 25905 / DSM 1728 / JCM 9062 / NBRC 15155 / AMRC-C165)).